Consider the following 457-residue polypeptide: Multidrug resistance protein MdtK (457 aa).

Residues 1–15 lie on the Cytoplasmic side of the membrane; the sequence is MQKYTSEARQLLALR. The chain crosses the membrane as a helical span at residues 16 to 36; sequence IPVILAQVAQTAMGFVDTVMA. Residues 37 to 52 are Extracellular-facing; it reads GGYSATDMAAVAIGTS. The chain crosses the membrane as a helical span at residues 53-73; that stretch reads IWLPAILFGHGLLLALTPVIA. Over 74-92 the chain is Cytoplasmic; that stretch reads QLNGSGRRERIAHQVRQGF. A helical membrane pass occupies residues 93-113; it reads WLAGFVSVLVMIVLWNAGYII. The Extracellular segment spans residues 114 to 126; it reads RSMHNIDPALADK. The helical transmembrane segment at 127 to 147 threads the bilayer; it reads AVGYLRALLWGAPGYLFFQVA. Over 148–159 the chain is Cytoplasmic; that stretch reads RNQCEGLAKTKP. A helical membrane pass occupies residues 160–180; the sequence is GMVMGFLGLLVNIPVNYIFIY. Residues 181 to 187 are Extracellular-facing; it reads GHFGMPE. The helical transmembrane segment at 188 to 208 threads the bilayer; that stretch reads LGGIGCGVATAAVYWVMFIAM. Residues 209 to 242 are Cytoplasmic-facing; that stretch reads LSYIKHARSMRDIRNEKGFGKPDSVVMKRLIQLG. A helical membrane pass occupies residues 243 to 263; the sequence is LPIALALFFEVTLFAVVALLV. The Extracellular segment spans residues 264–275; it reads SPLGIVDVAGHQ. A helical membrane pass occupies residues 276 to 296; sequence IALNFSSLMFVLPMSLAAAVT. The Cytoplasmic portion of the chain corresponds to 297 to 313; it reads IRVGYRLGQGSTLDAQT. A helical transmembrane segment spans residues 314-334; it reads AARTGLGVGICMAVVTAIFTV. Residues 335 to 349 lie on the Extracellular side of the membrane; that stretch reads TLRKHIALLYNDNPE. Residues 350 to 370 traverse the membrane as a helical segment; that stretch reads VVALAAQLMLLAAVYQISDSI. The Cytoplasmic portion of the chain corresponds to 371–386; the sequence is QVIGSGILRGYKDTRS. Residues 387 to 407 traverse the membrane as a helical segment; sequence IFFITFTAYWVLGLPSGYILA. The Extracellular portion of the chain corresponds to 408–417; the sequence is LTDLVVDRMG. A helical membrane pass occupies residues 418–438; that stretch reads PAGFWMGFIIGLTSAAVLMML. Topologically, residues 439–457 are cytoplasmic; it reads RMRYLQRQPSAIILQRAAR.

This sequence belongs to the multi antimicrobial extrusion (MATE) (TC 2.A.66.1) family. MdtK subfamily.

The protein localises to the cell inner membrane. Multidrug efflux pump that functions probably as a Na(+)/drug antiporter. The sequence is that of Multidrug resistance protein MdtK (mdtK) from Salmonella typhimurium (strain LT2 / SGSC1412 / ATCC 700720).